An 871-amino-acid chain; its full sequence is MHLSADISSALQQIEAVKKGIDESDDPKLQMQTAESLSTILGILQDPVFRTIVHVQDSLSELNAQLAQHPSMLPNDFDIDVAGNLVLSLNGGEVMYDFDEQRSSSHSHSAPGSPDKSGGVGEEPRPQSQNSKGAGVADLYATDYAQIQAIELVNDGTGLGFGIIGARNSGVIVKTILPGGVADKDGRLRSGDHILQIGDVNLHEMVSEQVAAVLRQSGTHVRLVVARPVEQSVPTPQYALEPGTAVVPTRVLVDPAELERYLISTGYPEIFGESSTASTPQTTTEDDRFVYRGETSMLIDPNIDLEELLALPETEKLQVELKKDANGLGITIAGYVCEKEELSGIFVKSVSPGSAADLSGRIRVNDRIIEVDGQSLQGYSNHQAVELLKKSGQVVNLRLERYLRGPKFEQLQQAIAANDKLPSSAPGTPSRAPMPTPVATTSSATTTPSRSITRELEEEALPAPEAFMTTPPSVTTMTTTTLSSFGAGKQLVAVRDSLDGSTKIIPTEVVPLADKTEAKNSGVITRHKYYTDPELSDDAETEIIRKWQKIVGSDVEVIVAQIKKFAVGGLGISLEGTVDVEGGREVRPHHYIRSILPDGPVGVNGVLRSGDELLEVNGERLLGMNHLEVVAILKELPLDVRMVCGRNRNSSLLPFSDDTLKKLSNNFENLLPATDRLVKAKSDGSLATAGSVADGDSVAAAAASFSKLKSRSLEPLTGLAMWSSQPQIIELVKGDRGLGFSILDYQDPLDPNDTLIVIRSLVPGGVAQLDGRLIPGDRLLFVNSINLENASLDQAVQALKGASKGVVRIGVAKPLPMTDNSLKACSNASTTSEETLDAQPSPPALPTVAPPAMPPSASMGAEPDLIPDWRN.

The 65-residue stretch at 3–67 folds into the L27 domain; sequence LSADISSALQ…SLSELNAQLA (65 aa). A disordered region spans residues 100 to 134; sequence EQRSSSHSHSAPGSPDKSGGVGEEPRPQSQNSKGA. 2 consecutive PDZ domains span residues 149-229 and 318-403; these read AIEL…ARPV and QVEL…ERYL. Residues 420–453 form a disordered region; it reads KLPSSAPGTPSRAPMPTPVATTSSATTTPSRSIT. Positions 437-451 are enriched in low complexity; it reads PVATTSSATTTPSRS. Residues 559–648 enclose the PDZ 3 domain; it reads VAQIKKFAVG…DVRMVCGRNR (90 aa). At S682 the chain carries Phosphoserine. The 87-residue stretch at 728-814 folds into the PDZ 4 domain; the sequence is IIELVKGDRG…GVVRIGVAKP (87 aa). The segment covering 822 to 833 has biased composition (polar residues); the sequence is LKACSNASTTSE. A disordered region spans residues 822–871; the sequence is LKACSNASTTSEETLDAQPSPPALPTVAPPAMPPSASMGAEPDLIPDWRN. The segment covering 840–854 has biased composition (pro residues); the sequence is PSPPALPTVAPPAMP.

The protein belongs to the Patj family. In terms of assembly, component of the SAC complex, a complex composed of crb, Patj and sdt. Interacts directly with nrx via its third and fourth PDZ domains. Interacts directly with par-6, possibly mediating a link between the SAC complex and the par-6 complex, which is composed of par-6, baz and aPKC. Expressed in primary and some secondary epithelial cells such as ectodermal cells, salivary glands, foregut, hindgut and invaginating tracheal cells. Also expressed in specific cells of the peripheral nervous system. Expressed in the germline.

The protein localises to the membrane. Its function is as follows. Involved in cell polarity establishment. Probably participates in the assembly, positioning and maintenance of adherens junctions via its interaction with the SAC complex. In Drosophila melanogaster (Fruit fly), this protein is Patj homolog (Patj).